The primary structure comprises 149 residues: Urease accessory protein UreE (149 aa).

It belongs to the UreE family.

It localises to the cytoplasm. In terms of biological role, involved in urease metallocenter assembly. Binds nickel. Probably functions as a nickel donor during metallocenter assembly. The sequence is that of Urease accessory protein UreE from Ruegeria pomeroyi (strain ATCC 700808 / DSM 15171 / DSS-3) (Silicibacter pomeroyi).